Reading from the N-terminus, the 572-residue chain is Cytochrome P450 monooxygenase xilC (572 aa).

Cysteine 515 contacts heme.

The protein belongs to the cytochrome P450 family. The cofactor is heme.

It functions in the pathway secondary metabolite biosynthesis. Cytochrome P450 monooxygenase; part of the gene cluster that mediates the biosynthesis of the 6-methyl-2-pyrone derivative xylariolide D. XilC hydroxylates the 5-alkyl-6-methyl-2-pyrone backbone called prexylariolide D, produced by the highly reducing polyketide synthase xilA, on its side chain to form xylariolide D. In Penicillium rubens (strain ATCC 28089 / DSM 1075 / NRRL 1951 / Wisconsin 54-1255) (Penicillium chrysogenum), this protein is Cytochrome P450 monooxygenase xilC.